The chain runs to 346 residues: Probable RNA methyltransferase PSPA7_3453 (346 aa).

Glu-91 serves as the catalytic Proton acceptor. The 227-residue stretch at 94–320 folds into the Radical SAM core domain; the sequence is LLPRGGLCVS…TKVRNSAGQD (227 aa). Residues Cys-101 and Cys-325 are joined by a disulfide bond. Positions 108, 112, and 115 each coordinate [4Fe-4S] cluster. S-adenosyl-L-methionine is bound by residues 153–154, Ser-183, 206–208, and Asn-282; these read GE and SLH. Cys-325 (S-methylcysteine intermediate) is an active-site residue.

Belongs to the radical SAM superfamily. RlmN family. [4Fe-4S] cluster is required as a cofactor.

The protein resides in the cytoplasm. The protein is Probable RNA methyltransferase PSPA7_3453 of Pseudomonas paraeruginosa (strain DSM 24068 / PA7) (Pseudomonas aeruginosa (strain PA7)).